The chain runs to 396 residues: RNA polymerase principal sigma factor HrdA (396 aa).

A compositionally biased stretch (basic residues) spans 1–20 (MRGGQRRASRLRPPTYRRRP). The segment at 1–96 (MRGGQRRASR…PTRTESGGPS (96 aa)) is disordered. Low complexity-rich tracts occupy residues 33-42 (QTQTLTQTDT) and 56-75 (LLAM…PGAP). A Polymerase core binding motif is present at residues 187 to 200 (DLVQEGNLGLIRAV). The segment at residues 357–376 (LEEIGRLFGVTRERIRQIES) is a DNA-binding region (H-T-H motif).

It belongs to the sigma-70 factor family. In terms of assembly, interacts transiently with the RNA polymerase catalytic core. Interacts with RNA polymerase-binding protein RbpA.

Functionally, sigma factors are initiation factors that promote the attachment of RNA polymerase to specific initiation sites and are then released. The polypeptide is RNA polymerase principal sigma factor HrdA (hrdA) (Streptomyces coelicolor (strain ATCC BAA-471 / A3(2) / M145)).